Consider the following 423-residue polypeptide: Dihydroorotase (423 aa).

The Zn(2+) site is built by histidine 60 and histidine 62. Substrate contacts are provided by residues 62–64 and asparagine 94; that span reads HFR. Residues aspartate 151, histidine 178, and histidine 231 each coordinate Zn(2+). Asparagine 277 is a substrate binding site. A Zn(2+)-binding site is contributed by aspartate 304. Aspartate 304 is an active-site residue. Substrate is bound at residue histidine 308.

This sequence belongs to the metallo-dependent hydrolases superfamily. DHOase family. Class I DHOase subfamily. Requires Zn(2+) as cofactor.

The catalysed reaction is (S)-dihydroorotate + H2O = N-carbamoyl-L-aspartate + H(+). Its pathway is pyrimidine metabolism; UMP biosynthesis via de novo pathway; (S)-dihydroorotate from bicarbonate: step 3/3. Functionally, catalyzes the reversible cyclization of carbamoyl aspartate to dihydroorotate. This Lactococcus lactis subsp. lactis (strain IL1403) (Streptococcus lactis) protein is Dihydroorotase.